We begin with the raw amino-acid sequence, 554 residues long: CTP synthase (554 aa).

Residues 1–265 are amidoligase domain; sequence MTPLIFVTGG…DELVIVQFKL (265 aa). CTP is bound at residue Ser13. Residue Ser13 coordinates UTP. ATP-binding positions include 14–19 and Asp71; that span reads SLGKGI. Asp71 and Glu139 together coordinate Mg(2+). Residues 146-148, 186-191, and Lys222 contribute to the CTP site; these read DIE and KTKPTQ. UTP contacts are provided by residues 186-191 and Lys222; that span reads KTKPTQ. A Glutamine amidotransferase type-1 domain is found at 292-545; sequence TIAVVGKYVD…VRAAREKKAG (254 aa). Gly353 lines the L-glutamine pocket. Cys380 serves as the catalytic Nucleophile; for glutamine hydrolysis. Residues 381–384, Glu404, and Arg471 each bind L-glutamine; that span reads YGMQ. Catalysis depends on residues His518 and Glu520.

It belongs to the CTP synthase family. Homotetramer.

The enzyme catalyses UTP + L-glutamine + ATP + H2O = CTP + L-glutamate + ADP + phosphate + 2 H(+). It catalyses the reaction L-glutamine + H2O = L-glutamate + NH4(+). The catalysed reaction is UTP + NH4(+) + ATP = CTP + ADP + phosphate + 2 H(+). It participates in pyrimidine metabolism; CTP biosynthesis via de novo pathway; CTP from UDP: step 2/2. With respect to regulation, allosterically activated by GTP, when glutamine is the substrate; GTP has no effect on the reaction when ammonia is the substrate. The allosteric effector GTP functions by stabilizing the protein conformation that binds the tetrahedral intermediate(s) formed during glutamine hydrolysis. Inhibited by the product CTP, via allosteric rather than competitive inhibition. Functionally, catalyzes the ATP-dependent amination of UTP to CTP with either L-glutamine or ammonia as the source of nitrogen. Regulates intracellular CTP levels through interactions with the four ribonucleotide triphosphates. The chain is CTP synthase from Xanthomonas oryzae pv. oryzae (strain MAFF 311018).